Here is a 389-residue protein sequence, read N- to C-terminus: MSYHDARRRHPHPIQTFRPESEYSSSAPGSGAQTPTGSGASSSQLPGLVSSIWGGLIRRFSAETPSLTHSQSYPADSSHSHFDDHNYNNSNDNNGVDGVYVPPRFHETIQRTASPMQPPPLEPVQLKGFAPDTPASARILTQAIAEEIRIMVPTRLSIVDEWNLVYSLDQDGASLGTLYDKCAKYSGRRVGFVLVVKDAEGGIFGAYLSDFPHPAPKYFGTGECFLWRASVMASLPPPPSADTTNLRGRTSTISSVGTGTDTATNTATNHNSGDDLASCTVLRATTTATPPHNDSADDLFADLTGTVDQTTIRFKAFPYSGVNDYYILCESHFLSVGAGDGKFGLWLDDGLEKGVSSTSQTFGNEQLSDQGEKFSVLGVEVWVIGSGGL.

Residues 1–12 are compositionally biased toward basic residues; sequence MSYHDARRRHPH. Disordered regions lie at residues 1 to 45, 67 to 90, and 238 to 269; these read MSYH…SSQL, LTHS…YNNS, and PPSA…TATN. Residues 22–45 are compositionally biased toward polar residues; sequence EYSSSAPGSGAQTPTGSGASSSQL. In terms of domain architecture, TLDc spans 138-385; sequence RILTQAIAEE…VLGVEVWVIG (248 aa). A compositionally biased stretch (polar residues) spans 241-256; the sequence is ADTTNLRGRTSTISSV. The segment covering 257–269 has biased composition (low complexity); the sequence is GTGTDTATNTATN.

It belongs to the OXR1 family.

It localises to the mitochondrion. Its function is as follows. May be involved in protection from oxidative damage. In Neurospora crassa (strain ATCC 24698 / 74-OR23-1A / CBS 708.71 / DSM 1257 / FGSC 987), this protein is Oxidation resistance protein 1 (oxr1).